The following is a 265-amino-acid chain: Undecaprenyl-diphosphatase (265 aa).

7 helical membrane-spanning segments follow: residues 38 to 58 (RSDF…CLAL), 75 to 95 (RDYV…GLIV), 108 to 128 (PVAW…HVAG), 135 to 155 (VVTW…GVFP), 181 to 201 (FVFM…LLEM), 215 to 235 (VAVA…WLLS), and 244 to 264 (VFAV…PAAA).

This sequence belongs to the UppP family.

The protein resides in the cell inner membrane. It carries out the reaction di-trans,octa-cis-undecaprenyl diphosphate + H2O = di-trans,octa-cis-undecaprenyl phosphate + phosphate + H(+). Its function is as follows. Catalyzes the dephosphorylation of undecaprenyl diphosphate (UPP). Confers resistance to bacitracin. This Xanthomonas oryzae pv. oryzae (strain MAFF 311018) protein is Undecaprenyl-diphosphatase.